Here is an 87-residue protein sequence, read N- to C-terminus: DNA-directed RNA polymerase subunit omega (87 aa).

The protein belongs to the RNA polymerase subunit omega family. In terms of assembly, the RNAP catalytic core consists of 2 alpha, 1 beta, 1 beta' and 1 omega subunit. When a sigma factor is associated with the core the holoenzyme is formed, which can initiate transcription.

The catalysed reaction is RNA(n) + a ribonucleoside 5'-triphosphate = RNA(n+1) + diphosphate. In terms of biological role, promotes RNA polymerase assembly. Latches the N- and C-terminal regions of the beta' subunit thereby facilitating its interaction with the beta and alpha subunits. The polypeptide is DNA-directed RNA polymerase subunit omega (Pseudomonas fluorescens (strain Pf0-1)).